The sequence spans 131 residues: Small ribosomal subunit protein uS11 (131 aa).

The protein belongs to the universal ribosomal protein uS11 family. As to quaternary structure, part of the 30S ribosomal subunit. Interacts with proteins S7 and S18. Binds to IF-3.

In terms of biological role, located on the platform of the 30S subunit, it bridges several disparate RNA helices of the 16S rRNA. Forms part of the Shine-Dalgarno cleft in the 70S ribosome. In Trichodesmium erythraeum (strain IMS101), this protein is Small ribosomal subunit protein uS11.